A 355-amino-acid chain; its full sequence is Holliday junction branch migration complex subunit RuvB (355 aa).

Positions 4–190 (TDKLAAERII…FGIVARLEFY (187 aa)) are large ATPase domain (RuvB-L). ATP contacts are provided by residues Leu29, Arg30, Gly71, Lys74, Thr75, Thr76, 137 to 139 (EDY), Arg180, Tyr190, and Arg227. Residue Thr75 coordinates Mg(2+). The interval 191–261 (DADQLARIVR…VADAALAMLD (71 aa)) is small ATPAse domain (RuvB-S). Residues 264 to 355 (PVGFDLMDRK…RGMWDTPAGK (92 aa)) form a head domain (RuvB-H) region. DNA contacts are provided by Arg300, Arg319, and Arg324.

It belongs to the RuvB family. Homohexamer. Forms an RuvA(8)-RuvB(12)-Holliday junction (HJ) complex. HJ DNA is sandwiched between 2 RuvA tetramers; dsDNA enters through RuvA and exits via RuvB. An RuvB hexamer assembles on each DNA strand where it exits the tetramer. Each RuvB hexamer is contacted by two RuvA subunits (via domain III) on 2 adjacent RuvB subunits; this complex drives branch migration. In the full resolvosome a probable DNA-RuvA(4)-RuvB(12)-RuvC(2) complex forms which resolves the HJ.

Its subcellular location is the cytoplasm. The enzyme catalyses ATP + H2O = ADP + phosphate + H(+). Its function is as follows. The RuvA-RuvB-RuvC complex processes Holliday junction (HJ) DNA during genetic recombination and DNA repair, while the RuvA-RuvB complex plays an important role in the rescue of blocked DNA replication forks via replication fork reversal (RFR). RuvA specifically binds to HJ cruciform DNA, conferring on it an open structure. The RuvB hexamer acts as an ATP-dependent pump, pulling dsDNA into and through the RuvAB complex. RuvB forms 2 homohexamers on either side of HJ DNA bound by 1 or 2 RuvA tetramers; 4 subunits per hexamer contact DNA at a time. Coordinated motions by a converter formed by DNA-disengaged RuvB subunits stimulates ATP hydrolysis and nucleotide exchange. Immobilization of the converter enables RuvB to convert the ATP-contained energy into a lever motion, pulling 2 nucleotides of DNA out of the RuvA tetramer per ATP hydrolyzed, thus driving DNA branch migration. The RuvB motors rotate together with the DNA substrate, which together with the progressing nucleotide cycle form the mechanistic basis for DNA recombination by continuous HJ branch migration. Branch migration allows RuvC to scan DNA until it finds its consensus sequence, where it cleaves and resolves cruciform DNA. The polypeptide is Holliday junction branch migration complex subunit RuvB (Burkholderia ambifaria (strain ATCC BAA-244 / DSM 16087 / CCUG 44356 / LMG 19182 / AMMD) (Burkholderia cepacia (strain AMMD))).